Here is a 40-residue protein sequence, read N- to C-terminus: Accessory gland-specific peptide 57Db (40 aa).

Positions 1-17 are cleaved as a signal peptide; that stretch reads MKITSALVLLFAGVAFA.

In terms of tissue distribution, lumen fluid of male accessory glands, becomes seminal fluid.

It is found in the secreted. In terms of biological role, transferred from male to female during mating and may affect egglaying and behavior after mating. The sequence is that of Accessory gland-specific peptide 57Db (Mst57Db) from Drosophila melanogaster (Fruit fly).